A 91-amino-acid chain; its full sequence is Small ribosomal subunit protein bS20 (91 aa).

Belongs to the bacterial ribosomal protein bS20 family.

Its function is as follows. Binds directly to 16S ribosomal RNA. This chain is Small ribosomal subunit protein bS20, found in Mycoplasma mobile (strain ATCC 43663 / 163K / NCTC 11711) (Mesomycoplasma mobile).